The following is a 259-amino-acid chain: Thiazole synthase (259 aa).

Lysine 99 functions as the Schiff-base intermediate with DXP in the catalytic mechanism. Residues glycine 161, 187–188 (AG), and 209–219 (NSAIACAQNPI) each bind 1-deoxy-D-xylulose 5-phosphate.

The protein belongs to the ThiG family. In terms of assembly, homotetramer. Forms heterodimers with either ThiH or ThiS.

Its subcellular location is the cytoplasm. The catalysed reaction is [ThiS sulfur-carrier protein]-C-terminal-Gly-aminoethanethioate + 2-iminoacetate + 1-deoxy-D-xylulose 5-phosphate = [ThiS sulfur-carrier protein]-C-terminal Gly-Gly + 2-[(2R,5Z)-2-carboxy-4-methylthiazol-5(2H)-ylidene]ethyl phosphate + 2 H2O + H(+). The protein operates within cofactor biosynthesis; thiamine diphosphate biosynthesis. Functionally, catalyzes the rearrangement of 1-deoxy-D-xylulose 5-phosphate (DXP) to produce the thiazole phosphate moiety of thiamine. Sulfur is provided by the thiocarboxylate moiety of the carrier protein ThiS. In vitro, sulfur can be provided by H(2)S. In Aliarcobacter butzleri (strain RM4018) (Arcobacter butzleri), this protein is Thiazole synthase.